Reading from the N-terminus, the 747-residue chain is Myotubularin-related protein 12 (747 aa).

Residues 205 to 643 (FDTLKDWCWE…PEIKVWAQRY (439 aa)) enclose the Myotubularin phosphatase domain. The tract at residues 449–558 (VPVFLLFLDC…KGQRKGMRFK (110 aa)) is interaction with MTM1. A phosphoserine mark is found at S564, S601, and S716.

The protein belongs to the protein-tyrosine phosphatase family. Non-receptor class myotubularin subfamily. In terms of assembly, heterodimer with lipid phosphatase MTM1. Heterodimer with lipid phosphatase MTMR2. In terms of tissue distribution, expressed in skeletal muscles (at protein level). Ubiquitous with prominent expression in brain, heart, kidney, placenta, and lung.

The protein resides in the cytoplasm. The protein localises to the sarcoplasmic reticulum. It localises to the myofibril. Its subcellular location is the sarcomere. In terms of biological role, acts as an adapter for the myotubularin-related phosphatases. Regulates phosphatase MTM1 protein stability and possibly its intracellular location. By stabilizing MTM1 protein levels, required for skeletal muscle maintenance but not for myogenesis. The protein is Myotubularin-related protein 12 (MTMR12) of Homo sapiens (Human).